A 382-amino-acid chain; its full sequence is Cysteine desulfurase IscS 1 (382 aa).

Asn149 is a pyridoxal 5'-phosphate binding site. Cys321 serves as the catalytic Cysteine persulfide intermediate. Cys321 contacts [2Fe-2S] cluster.

It belongs to the class-V pyridoxal-phosphate-dependent aminotransferase family. NifS/IscS subfamily. As to quaternary structure, homodimer. Forms a heterotetramer with IscU, interacts with other sulfur acceptors. It depends on pyridoxal 5'-phosphate as a cofactor.

Its subcellular location is the cytoplasm. It catalyses the reaction (sulfur carrier)-H + L-cysteine = (sulfur carrier)-SH + L-alanine. It participates in cofactor biosynthesis; iron-sulfur cluster biosynthesis. Its function is as follows. Master enzyme that delivers sulfur to a number of partners involved in Fe-S cluster assembly, tRNA modification or cofactor biosynthesis. Catalyzes the removal of elemental sulfur atoms from cysteine to produce alanine. Functions as a sulfur delivery protein for Fe-S cluster synthesis onto IscU, an Fe-S scaffold assembly protein, as well as other S acceptor proteins. This is Cysteine desulfurase IscS 1 from Archaeoglobus fulgidus (strain ATCC 49558 / DSM 4304 / JCM 9628 / NBRC 100126 / VC-16).